A 105-amino-acid polypeptide reads, in one-letter code: Met repressor (105 aa).

Belongs to the MetJ family. Homodimer.

Its subcellular location is the cytoplasm. Its function is as follows. This regulatory protein, when combined with SAM (S-adenosylmethionine) represses the expression of the methionine regulon and of enzymes involved in SAM synthesis. The sequence is that of Met repressor from Glaesserella parasuis serovar 5 (strain SH0165) (Haemophilus parasuis).